The following is a 426-amino-acid chain: D-tagatose-1,6-bisphosphate aldolase subunit KbaZ (426 aa).

The protein belongs to the GatZ/KbaZ family. KbaZ subfamily. As to quaternary structure, forms a complex with KbaY.

It functions in the pathway carbohydrate metabolism; D-tagatose 6-phosphate degradation; D-glyceraldehyde 3-phosphate and glycerone phosphate from D-tagatose 6-phosphate: step 2/2. In terms of biological role, component of the tagatose-1,6-bisphosphate aldolase KbaYZ that is required for full activity and stability of the Y subunit. Could have a chaperone-like function for the proper and stable folding of KbaY. When expressed alone, KbaZ does not show any aldolase activity. The chain is D-tagatose-1,6-bisphosphate aldolase subunit KbaZ from Escherichia coli O6:H1 (strain CFT073 / ATCC 700928 / UPEC).